Here is a 1058-residue protein sequence, read N- to C-terminus: Ubiquitin-like modifier-activating enzyme 1 (1058 aa).

The segment at 1-46 (MSSSPLSKKRRVSGPDPKPGSNCSSAQSVLSEVSSVPTNGMAKNGS) is disordered. Residue Ser2 is modified to N-acetylserine. 5 positions are modified to phosphoserine: Ser4, Ser13, Ser21, Ser24, and Ser46. The span at 24–36 (SSAQSVLSEVSSV) shows a compositional bias: low complexity. Tyr55 is subject to Phosphotyrosine. Tandem repeats lie at residues 63 to 199 (GHEA…GQLF) and 459 to 611 (GSDL…QVVI). Positions 63 to 611 (GHEAMKMLQT…GTKGNVQVVI (549 aa)) are 2 approximate repeats. ATP-binding positions include Ala478, Asp504, Arg515, Lys528, and 576 to 577 (DN). The residue at position 528 (Lys528) is an N6-succinyllysine. Cys632 functions as the Glycyl thioester intermediate in the catalytic mechanism. An N6-acetyllysine modification is found at Lys671. A Phosphothreonine modification is found at Thr800. Phosphoserine occurs at positions 810, 816, 820, and 835. N6-acetyllysine is present on Lys980.

This sequence belongs to the ubiquitin-activating E1 family. In terms of assembly, monomer. Interacts with GAN (via BTB domain). In terms of processing, ISGylated.

Its subcellular location is the cytoplasm. It is found in the mitochondrion. It localises to the nucleus. It catalyses the reaction ATP + ubiquitin + [E1 ubiquitin-activating enzyme]-L-cysteine = AMP + diphosphate + S-ubiquitinyl-[E1 ubiquitin-activating enzyme]-L-cysteine.. Its pathway is protein modification; protein ubiquitination. Catalyzes the first step in ubiquitin conjugation to mark cellular proteins for degradation through the ubiquitin-proteasome system. Activates ubiquitin by first adenylating its C-terminal glycine residue with ATP, and thereafter linking this residue to the side chain of a cysteine residue in E1, yielding a ubiquitin-E1 thioester and free AMP. Essential for the formation of radiation-induced foci, timely DNA repair and for response to replication stress. Promotes the recruitment of TP53BP1 and BRCA1 at DNA damage sites. In Rattus norvegicus (Rat), this protein is Ubiquitin-like modifier-activating enzyme 1.